Reading from the N-terminus, the 584-residue chain is Aspartate--tRNA(Asp/Asn) ligase (584 aa).

Glutamate 173 lines the L-aspartate pocket. The segment at 197 to 200 (QLFK) is aspartate. Arginine 219 is an L-aspartate binding site. ATP is bound by residues 219 to 221 (RDE) and glutamine 228. Histidine 446 contacts L-aspartate. Glutamate 476 is an ATP binding site. Residue arginine 483 coordinates L-aspartate. 528–531 (GLDR) lines the ATP pocket.

This sequence belongs to the class-II aminoacyl-tRNA synthetase family. Type 1 subfamily. As to quaternary structure, homodimer.

The protein resides in the cytoplasm. The enzyme catalyses tRNA(Asx) + L-aspartate + ATP = L-aspartyl-tRNA(Asx) + AMP + diphosphate. Functionally, aspartyl-tRNA synthetase with relaxed tRNA specificity since it is able to aspartylate not only its cognate tRNA(Asp) but also tRNA(Asn). Reaction proceeds in two steps: L-aspartate is first activated by ATP to form Asp-AMP and then transferred to the acceptor end of tRNA(Asp/Asn). This is Aspartate--tRNA(Asp/Asn) ligase from Sulfurovum sp. (strain NBC37-1).